We begin with the raw amino-acid sequence, 353 residues long: Photosystem II D2 protein (353 aa).

T2 is modified (N-acetylthreonine). At T2 the chain carries Phosphothreonine. Residues 41 to 61 (CAYFALGGWFTGTTFVTSWYT) traverse the membrane as a helical segment. H118 contributes to the chlorophyll a binding site. A helical transmembrane segment spans residues 125-141 (GFMLRQFELARSVQLRP). Pheophytin a contacts are provided by Q130 and N143. Residues 153-166 (VFVSVFLIYPLGQS) traverse the membrane as a helical segment. H198 serves as a coordination point for chlorophyll a. A helical transmembrane segment spans residues 208 to 228 (AALLCAIHGATVENTLFEDGD). A plastoquinone is bound by residues H215 and F262. H215 serves as a coordination point for Fe cation. H269 is a Fe cation binding site. The helical transmembrane segment at 279–295 (GSWMSAIGVVGLALNLR) threads the bilayer.

This sequence belongs to the reaction center PufL/M/PsbA/D family. As to quaternary structure, PSII is composed of 1 copy each of membrane proteins PsbA, PsbB, PsbC, PsbD, PsbE, PsbF, PsbH, PsbI, PsbJ, PsbK, PsbL, PsbM, PsbT, PsbX, PsbY, PsbZ, Psb30/Ycf12, at least 3 peripheral proteins of the oxygen-evolving complex and a large number of cofactors. It forms dimeric complexes. The D1/D2 heterodimer binds P680, chlorophylls that are the primary electron donor of PSII, and subsequent electron acceptors. It shares a non-heme iron and each subunit binds pheophytin, quinone, additional chlorophylls, carotenoids and lipids. There is also a Cl(-1) ion associated with D1 and D2, which is required for oxygen evolution. The PSII complex binds additional chlorophylls, carotenoids and specific lipids. is required as a cofactor.

It is found in the plastid. Its subcellular location is the chloroplast thylakoid membrane. The enzyme catalyses 2 a plastoquinone + 4 hnu + 2 H2O = 2 a plastoquinol + O2. Photosystem II (PSII) is a light-driven water:plastoquinone oxidoreductase that uses light energy to abstract electrons from H(2)O, generating O(2) and a proton gradient subsequently used for ATP formation. It consists of a core antenna complex that captures photons, and an electron transfer chain that converts photonic excitation into a charge separation. The D1/D2 (PsbA/PsbD) reaction center heterodimer binds P680, the primary electron donor of PSII as well as several subsequent electron acceptors. D2 is needed for assembly of a stable PSII complex. This chain is Photosystem II D2 protein, found in Pinus koraiensis (Korean pine).